Here is a 1363-residue protein sequence, read N- to C-terminus: Spike glycoprotein (1363 aa).

The first 13 residues, 1–13, serve as a signal peptide directing secretion; sequence MFLILLISLPMAL. The Extracellular segment spans residues 14 to 1307; that stretch reads AVIGDLKCTT…GTYEYYVKWP (1294 aa). Residues 15-298 form the BetaCoV S1-NTD domain; it reads VIGDLKCTTV…DFMSEIKCKT (284 aa). 5 disulfide bridges follow: Cys-21-Cys-165, Cys-160-Cys-193, Cys-172-Cys-252, Cys-286-Cys-296, and Cys-331-Cys-356. 2 N-linked (GlcNAc...) asparagine; by host glycosylation sites follow: Asn-59 and Asn-133. Asn-198 is a glycosylation site (N-linked (GlcNAc...) asparagine; by host). In terms of domain architecture, BetaCoV S1-CTD spans 329 to 617; it reads PDCNIEAWLN…DVNSGTTCST (289 aa). Asn-359 carries an N-linked (GlcNAc...) asparagine; by host glycan. Cystine bridges form between Cys-374–Cys-427 and Cys-386–Cys-615. N-linked (GlcNAc...) asparagine; by host glycans are attached at residues Asn-437, Asn-649, Asn-676, Asn-696, Asn-714, Asn-739, and Asn-788. Fusion peptide regions lie at residues 914–935 and 933–953; these read SAIE…VEAY and EAYN…VQSY. An N-linked (GlcNAc...) asparagine; by host glycan is attached at Asn-937. Residues Cys-938 and Cys-949 are joined by a disulfide bond. The segment at 1014–1064 is heptad repeat 1; sequence QKLIANAFNNALDAIQEGFDATNSALVKIQAVVNANAEALNNLLQQLSNRF. Positions 1043–1087 form a coiled coil; sequence QAVVNANAEALNNLLQQLSNRFGAISSSLQEILSRLDALEAQAQI. 6 N-linked (GlcNAc...) asparagine; by host glycosylation sites follow: Asn-1194, Asn-1224, Asn-1234, Asn-1253, Asn-1267, and Asn-1288. Residues 1258–1296 form a heptad repeat 2 region; sequence APDLSLDYINVTFLDLQDEMNRLQEAIKVLNQSYINLKD. The stretch at 1269–1297 forms a coiled coil; it reads TFLDLQDEMNRLQEAIKVLNQSYINLKDI. Residues 1308-1328 traverse the membrane as a helical segment; sequence WYVWLLIGLAGVAMLVLLFFI. At 1329-1363 the chain is on the cytoplasmic side; the sequence is CCCTGCGTSCFKKCGGCCDDYTGHQELVIKTSHDD. Residues 1359–1363 carry the KxHxx motif; it reads TSHDD.

The protein belongs to the betacoronaviruses spike protein family. As to quaternary structure, homotrimer; each monomer consists of a S1 and a S2 subunit. The resulting peplomers protrude from the virus surface as spikes. Post-translationally, specific enzymatic cleavages in vivo yield mature proteins. The precursor is processed into S1 and S2 by host cell furin or another cellular protease to yield the mature S1 and S2 proteins. Additionally, a second cleavage leads to the release of a fusion peptide after viral attachment to host cell receptor. The cytoplasmic Cys-rich domain is palmitoylated. Spike glycoprotein is digested within host endosomes.

It is found in the virion membrane. The protein localises to the host endoplasmic reticulum-Golgi intermediate compartment membrane. It localises to the host cell membrane. Its function is as follows. Attaches the virion to the cell membrane by interacting with host receptor, initiating the infection. Mediates fusion of the virion and cellular membranes by acting as a class I viral fusion protein. Under the current model, the protein has at least three conformational states: pre-fusion native state, pre-hairpin intermediate state, and post-fusion hairpin state. During viral and target cell membrane fusion, the coiled coil regions (heptad repeats) assume a trimer-of-hairpins structure, positioning the fusion peptide in close proximity to the C-terminal region of the ectodomain. The formation of this structure appears to drive apposition and subsequent fusion of viral and target cell membranes. Functionally, acts as a viral fusion peptide which is unmasked following S2 cleavage occurring upon virus endocytosis. The polypeptide is Spike glycoprotein (Bos taurus (Bovine)).